A 619-amino-acid polypeptide reads, in one-letter code: DBH-like monooxygenase protein 2 (619 aa).

The N-terminal stretch at 1–21 (MACVLLFRLFLLLVLAAFSQG) is a signal peptide. Over 22 to 594 (KRLGPTSPLR…LSGSNTATLR (573 aa)) the chain is Extracellular. The region spanning 40 to 156 (RAVFLRWDFD…DTMRVLAAYG (117 aa)) is the DOMON domain. Residue tyrosine 209 is part of the active site. 2 cysteine pairs are disulfide-bonded: cysteine 211-cysteine 261 and cysteine 248-cysteine 271. Histidine 241 and histidine 242 together coordinate Cu cation. Asparagine 250 carries an N-linked (GlcNAc...) asparagine glycan. Cu cation is bound by residues histidine 309, histidine 390, and histidine 392. 2 cysteine pairs are disulfide-bonded: cysteine 366/cysteine 481 and cysteine 444/cysteine 466. Histidine 390 is an active-site residue. An N-linked (GlcNAc...) asparagine glycan is attached at asparagine 405. Cu cation is bound at residue methionine 465. N-linked (GlcNAc...) asparagine glycosylation is present at asparagine 477. A helical membrane pass occupies residues 595–615 (PLPMIAVLFLQGSLSCLLAML). The Cytoplasmic portion of the chain corresponds to 616-619 (QTGV).

This sequence belongs to the copper type II ascorbate-dependent monooxygenase family. Cu(2+) is required as a cofactor. Expressed at low levels in thymus and testis.

The protein localises to the membrane. This Mus musculus (Mouse) protein is DBH-like monooxygenase protein 2 (Moxd2).